The sequence spans 411 residues: Probable UDP-arabinose 4-epimerase 3 (411 aa).

Positions 1 to 13 (MLSFSRARSQGRN) are enriched in polar residues. The tract at residues 1–22 (MLSFSRARSQGRNTRPLGGGME) is disordered. The Cytoplasmic segment spans residues 1–31 (MLSFSRARSQGRNTRPLGGGMEYLEPKRKSN). The helical; Signal-anchor for type II membrane protein transmembrane segment at 32–50 (VMGKIILVVSLTALCIFML) threads the bilayer. The Lumenal portion of the chain corresponds to 51–411 (KHAPSFTSPT…KTHPHGYASS (361 aa)). Residue 71 to 102 (HVLVTGGAGYIGSHAALRLLKDSYRVTIVDNL) participates in NAD(+) binding. Tyr-219 serves as the catalytic Proton acceptor.

The protein belongs to the NAD(P)-dependent epimerase/dehydratase family. NAD(+) serves as cofactor.

Its subcellular location is the golgi apparatus. It localises to the golgi stack membrane. It catalyses the reaction UDP-beta-L-arabinopyranose = UDP-alpha-D-xylose. It functions in the pathway nucleotide-sugar biosynthesis; UDP-L-arabinose biosynthesis; UDP-L-arabinose from UDP-alpha-D-xylose: step 1/1. Its pathway is cell wall biogenesis; cell wall polysaccharide biosynthesis. In Arabidopsis thaliana (Mouse-ear cress), this protein is Probable UDP-arabinose 4-epimerase 3.